Consider the following 706-residue polypeptide: Termination factor NPH-I homolog (706 aa).

The region spanning I62–R227 is the Helicase ATP-binding domain. H75–T82 provides a ligand contact to ATP. Residues D168 to H171 carry the DEAH box motif. Residues Q417 to L599 form the Helicase C-terminal domain.

It belongs to the DEAD box helicase family. DEAH subfamily. Part of the viral DNA-directed RNA polymerase that consists of 8 polII-like subunits (RPB1, RPB2, RPB3, RPB5, RPB6, RPB7, RPB9, RPB10), a capping enzyme and a termination factor.

Its subcellular location is the virion. In terms of biological role, putative DNA-dependent ATPase required for providing the needed energy to achieve the termination of early transcripts. The chain is Termination factor NPH-I homolog from Ornithodoros (relapsing fever ticks).